The sequence spans 199 residues: Crossover junction endodeoxyribonuclease RuvC (199 aa).

Catalysis depends on residues Asp17, Glu76, and Asp148. Residues Asp17, Glu76, and Asp148 each contribute to the Mg(2+) site.

The protein belongs to the RuvC family. As to quaternary structure, homodimer which binds Holliday junction (HJ) DNA. The HJ becomes 2-fold symmetrical on binding to RuvC with unstacked arms; it has a different conformation from HJ DNA in complex with RuvA. In the full resolvosome a probable DNA-RuvA(4)-RuvB(12)-RuvC(2) complex forms which resolves the HJ. Mg(2+) is required as a cofactor.

The protein resides in the cytoplasm. The enzyme catalyses Endonucleolytic cleavage at a junction such as a reciprocal single-stranded crossover between two homologous DNA duplexes (Holliday junction).. The RuvA-RuvB-RuvC complex processes Holliday junction (HJ) DNA during genetic recombination and DNA repair. Endonuclease that resolves HJ intermediates. Cleaves cruciform DNA by making single-stranded nicks across the HJ at symmetrical positions within the homologous arms, yielding a 5'-phosphate and a 3'-hydroxyl group; requires a central core of homology in the junction. The consensus cleavage sequence is 5'-(A/T)TT(C/G)-3'. Cleavage occurs on the 3'-side of the TT dinucleotide at the point of strand exchange. HJ branch migration catalyzed by RuvA-RuvB allows RuvC to scan DNA until it finds its consensus sequence, where it cleaves and resolves the cruciform DNA. The protein is Crossover junction endodeoxyribonuclease RuvC of Mannheimia succiniciproducens (strain KCTC 0769BP / MBEL55E).